We begin with the raw amino-acid sequence, 359 residues long: tRNA pseudouridine synthase B (359 aa).

D63 acts as the Nucleophile in catalysis.

It belongs to the pseudouridine synthase TruB family. Type 1 subfamily.

The enzyme catalyses uridine(55) in tRNA = pseudouridine(55) in tRNA. In terms of biological role, responsible for synthesis of pseudouridine from uracil-55 in the psi GC loop of transfer RNAs. The sequence is that of tRNA pseudouridine synthase B from Psychrobacter cryohalolentis (strain ATCC BAA-1226 / DSM 17306 / VKM B-2378 / K5).